The primary structure comprises 173 residues: Crossover junction endodeoxyribonuclease RuvC (173 aa).

Residues Asp-8, Glu-67, and Asp-139 contribute to the active site. Residues Asp-8, Glu-67, and Asp-139 each coordinate Mg(2+).

The protein belongs to the RuvC family. In terms of assembly, homodimer which binds Holliday junction (HJ) DNA. The HJ becomes 2-fold symmetrical on binding to RuvC with unstacked arms; it has a different conformation from HJ DNA in complex with RuvA. In the full resolvosome a probable DNA-RuvA(4)-RuvB(12)-RuvC(2) complex forms which resolves the HJ. Mg(2+) is required as a cofactor.

It is found in the cytoplasm. The catalysed reaction is Endonucleolytic cleavage at a junction such as a reciprocal single-stranded crossover between two homologous DNA duplexes (Holliday junction).. In terms of biological role, the RuvA-RuvB-RuvC complex processes Holliday junction (HJ) DNA during genetic recombination and DNA repair. Endonuclease that resolves HJ intermediates. Cleaves cruciform DNA by making single-stranded nicks across the HJ at symmetrical positions within the homologous arms, yielding a 5'-phosphate and a 3'-hydroxyl group; requires a central core of homology in the junction. The consensus cleavage sequence is 5'-(A/T)TT(C/G)-3'. Cleavage occurs on the 3'-side of the TT dinucleotide at the point of strand exchange. HJ branch migration catalyzed by RuvA-RuvB allows RuvC to scan DNA until it finds its consensus sequence, where it cleaves and resolves the cruciform DNA. The sequence is that of Crossover junction endodeoxyribonuclease RuvC from Shewanella sp. (strain MR-4).